Here is a 407-residue protein sequence, read N- to C-terminus: S-adenosylmethionine synthase (407 aa).

140 to 145 contributes to the ATP binding site; sequence GQGSAD.

It belongs to the AdoMet synthase 2 family. The cofactor is Mg(2+).

The catalysed reaction is L-methionine + ATP + H2O = S-adenosyl-L-methionine + phosphate + diphosphate. Its pathway is amino-acid biosynthesis; S-adenosyl-L-methionine biosynthesis; S-adenosyl-L-methionine from L-methionine: step 1/1. In terms of biological role, catalyzes the formation of S-adenosylmethionine from methionine and ATP. This chain is S-adenosylmethionine synthase, found in Methanosphaera stadtmanae (strain ATCC 43021 / DSM 3091 / JCM 11832 / MCB-3).